Consider the following 408-residue polypeptide: Myb/SANT-like DNA-binding domain-containing protein 4 (408 aa).

The Myb-like domain maps to 4–77 (LKRKRKSNFS…EVKRRYLDWR (74 aa)). Residues 236–367 (HLLVTLEKQK…IEKERLQDAL (132 aa)) are a coiled coil.

This chain is Myb/SANT-like DNA-binding domain-containing protein 4 (msantd4), found in Xenopus tropicalis (Western clawed frog).